The sequence spans 90 residues: Small ribosomal subunit protein bS16 (90 aa).

This sequence belongs to the bacterial ribosomal protein bS16 family.

This Shouchella clausii (strain KSM-K16) (Alkalihalobacillus clausii) protein is Small ribosomal subunit protein bS16.